The chain runs to 426 residues: Adenylosuccinate synthetase 2 (426 aa).

Residues 12 to 18 (GDEGKGK) and 40 to 42 (GHT) contribute to the GTP site. The active-site Proton acceptor is the aspartate 13. Mg(2+) contacts are provided by aspartate 13 and glycine 40. IMP contacts are provided by residues 13–16 (DEGK), 38–41 (NAGH), arginine 147, asparagine 223, threonine 238, and arginine 302. The Proton donor role is filled by histidine 41. 298–304 (TNTGRRR) serves as a coordination point for substrate. GTP-binding positions include arginine 304, 330–332 (KLD), and 412–414 (GVG).

It belongs to the adenylosuccinate synthetase family. In terms of assembly, homodimer. It depends on Mg(2+) as a cofactor.

The protein resides in the cytoplasm. It catalyses the reaction IMP + L-aspartate + GTP = N(6)-(1,2-dicarboxyethyl)-AMP + GDP + phosphate + 2 H(+). Its pathway is purine metabolism; AMP biosynthesis via de novo pathway; AMP from IMP: step 1/2. Its function is as follows. Plays an important role in the de novo pathway and in the salvage pathway of purine nucleotide biosynthesis. Catalyzes the first committed step in the biosynthesis of AMP from IMP. The polypeptide is Adenylosuccinate synthetase 2 (Laccaria bicolor (strain S238N-H82 / ATCC MYA-4686) (Bicoloured deceiver)).